Reading from the N-terminus, the 491-residue chain is 2,3-bisphosphoglycerate-independent phosphoglycerate mutase (491 aa).

Mn(2+) contacts are provided by aspartate 11 and serine 61. Serine 61 serves as the catalytic Phosphoserine intermediate. Substrate-binding positions include histidine 118, 147-148 (RD), arginine 177, arginine 183, 248-251 (RSDR), and lysine 320. The Mn(2+) site is built by aspartate 386, histidine 390, aspartate 427, histidine 428, and histidine 445.

The protein belongs to the BPG-independent phosphoglycerate mutase family. As to quaternary structure, monomer. Mn(2+) is required as a cofactor.

The enzyme catalyses (2R)-2-phosphoglycerate = (2R)-3-phosphoglycerate. The protein operates within carbohydrate degradation; glycolysis; pyruvate from D-glyceraldehyde 3-phosphate: step 3/5. Catalyzes the interconversion of 2-phosphoglycerate and 3-phosphoglycerate. The polypeptide is 2,3-bisphosphoglycerate-independent phosphoglycerate mutase (Aliarcobacter butzleri (strain RM4018) (Arcobacter butzleri)).